The primary structure comprises 103 residues: Alpha-ketoglutarate dehydrogenase component 4 (103 aa).

M1 is modified (N-acetylmethionine). At K5 the chain carries N6-succinyllysine. Positions 23-70 (IRFPDRRDNPKPNVSEVLRSAGLPSHTSSISQHSKGSKSPDWLMHQGP) are disordered. Positions 47 to 61 (SHTSSISQHSKGSKS) are enriched in low complexity. S61 and S90 each carry phosphoserine.

It belongs to the alpha-ketoglutarate dehydrogenase component 4 family. As to quaternary structure, component of the 2-oxoglutarate dehydrogenase complex (OGDHC), composed of OGDH (2-oxoglutarate dehydrogenase; also called E1 subunit), DLST (dihydrolipoamide succinyltransferase; also called E2 subunit) and DLD (dihydrolipoamide dehydrogenase; also called E3 subunit), and the assembly factor KGD4. Within OGDHC complex, interacts (via N-terminus) with E3 subunit and (via C-terminus) with E2 subunit.

The protein resides in the mitochondrion. Its function is as follows. Molecular adapter that is necessary to form a stable 2-oxoglutarate dehydrogenase enzyme complex (OGDHC). Enables the specific recruitment of E3 subunit to E2 subunit in the 2-oxoglutarate dehydrogenase complex (OGDHC). This is Alpha-ketoglutarate dehydrogenase component 4 (KGD4) from Bos taurus (Bovine).